Consider the following 65-residue polypeptide: Beta-toxin Am IT (65 aa).

Residue E1 is modified to Pyrrolidone carboxylic acid (Glu); partial. Residues 1 to 64 (EHGYLLDKYT…LWNYKTNKCK (64 aa)) enclose the LCN-type CS-alpha/beta domain. 4 cysteine pairs are disulfide-bonded: C12–C63, C16–C38, C23–C45, and C27–C47. A Serine amide modification is found at S65.

It belongs to the long (4 C-C) scorpion toxin superfamily. Sodium channel inhibitor family. As to expression, expressed by the venom gland.

It is found in the secreted. Has a toxic effect on insects and mammals. On German cockroach larvae, it provokes contraction, paralysis and lethality. Intracerebroventricular injection into mice causes severe neurotoxic symptoms. It fully competes with the binding of the iodinated Css4 (AC P60266) on rat brain synaptosomes, with moderate affinity and in a concentration-dependent manner (EC(50)=25 nM). It may act on both site 3 and site 4 of voltage-gated sodium channels. This Androctonus mauritanicus mauritanicus (Scorpion) protein is Beta-toxin Am IT.